A 271-amino-acid chain; its full sequence is Ferric enterobactin transport ATP-binding protein FepC (271 aa).

The region spanning 8–244 is the ABC transporter domain; it reads LRGEQLTLGY…ELIERIYGLR (237 aa). 40 to 47 is an ATP binding site; sequence GPNGCGKS.

Belongs to the ABC transporter superfamily. The complex is composed of two ATP-binding proteins (FepC), two transmembrane proteins (FepD and FepG) and a solute-binding protein (FepB).

Its subcellular location is the cell inner membrane. It catalyses the reaction Fe(III)-enterobactin(out) + ATP + H2O = Fe(III)-enterobactin(in) + ADP + phosphate + H(+). Part of the ABC transporter complex FepBDGC involved in ferric enterobactin uptake. Responsible for energy coupling to the transport system. The protein is Ferric enterobactin transport ATP-binding protein FepC (fepC) of Escherichia coli (strain K12).